The following is a 131-amino-acid chain: Profilin-5 (131 aa).

Cys-13 and Cys-115 are disulfide-bonded. The Involved in PIP2 interaction motif lies at 81–97 (VVIRGKKGTGGITIKKT). Thr-111 is subject to Phosphothreonine.

It belongs to the profilin family. Multimer. Occurs in many kinds of cells as a complex with monomeric actin in a 1:1 ratio. Phosphorylated by MAP kinases. In terms of tissue distribution, expressed in vegetative tissues. Present in shoots, roots and coleoptiles. Also detected in endosperm and pollen.

It localises to the cytoplasm. The protein resides in the cytoskeleton. With respect to regulation, actin binding is enhanced by calcium Ca(2+). Binds to actin and affects the structure of the cytoskeleton. At high concentrations, profilin prevents the polymerization of actin, whereas it enhances it at low concentrations. By binding to PIP2, it inhibits the formation of IP3 and DG. Has a high affinity for poly-proline. This Zea mays (Maize) protein is Profilin-5.